Here is a 755-residue protein sequence, read N- to C-terminus: Polyribonucleotide nucleotidyltransferase (755 aa).

Positions 493 and 499 each coordinate Mg(2+). Positions 560 to 619 (PRIMTIQIPVDKIGALIGPGGKTIRNICETTGAQIDIEDDGRVFITTPDGAAARQAISMI) constitute a KH domain. The region spanning 629-698 (GDIFLGKVVS…TTGKISLSRR (70 aa)) is the S1 motif domain. The interval 699 to 755 (AVLTGETPEERKAAGAAPRPRPREEQRGGRDEPRSLRDELRGPRREGDRPRPRRRDD) is disordered. Residues 719-755 (RPREEQRGGRDEPRSLRDELRGPRREGDRPRPRRRDD) show a composition bias toward basic and acidic residues.

This sequence belongs to the polyribonucleotide nucleotidyltransferase family. Requires Mg(2+) as cofactor.

The protein resides in the cytoplasm. It carries out the reaction RNA(n+1) + phosphate = RNA(n) + a ribonucleoside 5'-diphosphate. In terms of biological role, involved in mRNA degradation. Catalyzes the phosphorolysis of single-stranded polyribonucleotides processively in the 3'- to 5'-direction. This chain is Polyribonucleotide nucleotidyltransferase, found in Chloroflexus aurantiacus (strain ATCC 29366 / DSM 635 / J-10-fl).